The following is a 257-amino-acid chain: Acetylglutamate kinase (257 aa).

Residues 43-44 (GG), R65, and N157 contribute to the substrate site. ATP-binding positions include 180–185 (DVSGIL) and 208–210 (IIT).

It belongs to the acetylglutamate kinase family. ArgB subfamily. As to quaternary structure, homodimer.

The protein resides in the cytoplasm. It carries out the reaction N-acetyl-L-glutamate + ATP = N-acetyl-L-glutamyl 5-phosphate + ADP. The protein operates within amino-acid biosynthesis; L-arginine biosynthesis; N(2)-acetyl-L-ornithine from L-glutamate: step 2/4. Functionally, catalyzes the ATP-dependent phosphorylation of N-acetyl-L-glutamate. The protein is Acetylglutamate kinase of Proteus mirabilis (strain HI4320).